A 165-amino-acid chain; its full sequence is Nucleotide-binding protein RoseRS_0530 (165 aa).

This sequence belongs to the YajQ family.

In terms of biological role, nucleotide-binding protein. This Roseiflexus sp. (strain RS-1) protein is Nucleotide-binding protein RoseRS_0530.